A 334-amino-acid chain; its full sequence is MKVIASAPAKVILFGEHSVVYGKPAIAAAIDLRTFVEAELIREKKIRIEAHDIKVPGLTVSFSENEIYFETDYGKAAEVLSYVREAINLVLEEADKKNVGIKVSITSQIPVGAGLGSSAAVAVATIGAVSKLLGLELSKEEIAKMGHKTELLVQGASSGIDPTVSAIGGFIFYEKGKFEHLPFMELPIVVGYTGSSGPTKELVAMVRKRYEEMPELIVPILEAMGKVVEKAKDVILSNVDKEEKFERLGVLMNINHGLLDALGVSTKKLSELVYAARVAGALGAKITGAGGGGCMYALAPNKQREVATAIRIAGGTPMITEISREGLKIEEVIK.

Proline 110–alanine 120 lines the ATP pocket. The active-site Proton acceptor is aspartate 161.

It belongs to the GHMP kinase family. Mevalonate kinase subfamily. As to quaternary structure, homodimer. Mg(2+) serves as cofactor.

The protein localises to the cytoplasm. The catalysed reaction is (R)-mevalonate + ATP = (R)-5-phosphomevalonate + ADP + H(+). The protein operates within isoprenoid biosynthesis; isopentenyl diphosphate biosynthesis via mevalonate pathway; isopentenyl diphosphate from (R)-mevalonate: step 1/3. Catalyzes the phosphorylation of (R)-mevalonate (MVA) to (R)-mevalonate 5-phosphate (MVAP). Functions in the mevalonate (MVA) pathway leading to isopentenyl diphosphate (IPP), a key precursor for the biosynthesis of isoprenoid compounds such as archaeal membrane lipids. The chain is Mevalonate kinase from Pyrococcus furiosus (strain ATCC 43587 / DSM 3638 / JCM 8422 / Vc1).